The primary structure comprises 301 residues: uncharacterized protein (301 aa).

A run of 9 helical transmembrane segments spans residues 1–21 (MSWIIFYTVIAALLILDLRII), 33–53 (SVLFSLFYLVIACLFGIYVYY), 72–92 (AMSLDNIFVISIIFQFFKIPW), 101–121 (FGIIGVIIFRAVMIYGGIILI), 124–144 (FAWLLYIFAVILIATGIKTFY), 194–214 (VLIEAIDLVFAIDSIPAIFAI), 220–240 (IIYTSNIFAILGLRALFFCLA), 253–273 (LALILIFISFKIFIHHYIAIP), and 274–294 (EYVAFTVTMTLLLFGIIASII).

Belongs to the TerC family.

It is found in the cell membrane. This is an uncharacterized protein from Rickettsia conorii (strain ATCC VR-613 / Malish 7).